A 462-amino-acid chain; its full sequence is Glycine--tRNA ligase (462 aa).

Substrate-binding residues include R98 and E174. Residues 206 to 208, 216 to 221, 290 to 291, and 334 to 337 contribute to the ATP site; these read RNE, FRTREF, EL, and GADR. 221–225 lines the substrate pocket; that stretch reads FEQME. 330–334 is a substrate binding site; it reads EPSLG.

This sequence belongs to the class-II aminoacyl-tRNA synthetase family. Homodimer.

The protein resides in the cytoplasm. It carries out the reaction tRNA(Gly) + glycine + ATP = glycyl-tRNA(Gly) + AMP + diphosphate. Functionally, catalyzes the attachment of glycine to tRNA(Gly). The chain is Glycine--tRNA ligase from Lachnoclostridium phytofermentans (strain ATCC 700394 / DSM 18823 / ISDg) (Clostridium phytofermentans).